The following is a 166-amino-acid chain: Phosphopantetheine adenylyltransferase (166 aa).

A substrate-binding site is contributed by S8. Residues S8–F9 and H16 contribute to the ATP site. Residues K40, T72, and R86 each coordinate substrate. ATP-binding positions include G87–R89, E97, and Y122–S128.

Belongs to the bacterial CoaD family. In terms of assembly, homohexamer. The cofactor is Mg(2+).

The protein resides in the cytoplasm. The catalysed reaction is (R)-4'-phosphopantetheine + ATP + H(+) = 3'-dephospho-CoA + diphosphate. The protein operates within cofactor biosynthesis; coenzyme A biosynthesis; CoA from (R)-pantothenate: step 4/5. Its function is as follows. Reversibly transfers an adenylyl group from ATP to 4'-phosphopantetheine, yielding dephospho-CoA (dPCoA) and pyrophosphate. This chain is Phosphopantetheine adenylyltransferase, found in Synechococcus elongatus (strain ATCC 33912 / PCC 7942 / FACHB-805) (Anacystis nidulans R2).